The primary structure comprises 39 residues: Cytochrome b559 subunit beta (39 aa).

A helical transmembrane segment spans residues 14-30 (WLAVHGLAIPTVSFLGS). His18 provides a ligand contact to heme.

The protein belongs to the PsbE/PsbF family. In terms of assembly, heterodimer of an alpha subunit and a beta subunit. PSII is composed of 1 copy each of membrane proteins PsbA, PsbB, PsbC, PsbD, PsbE, PsbF, PsbH, PsbI, PsbJ, PsbK, PsbL, PsbM, PsbT, PsbX, PsbY, PsbZ, Psb30/Ycf12, at least 3 peripheral proteins of the oxygen-evolving complex and a large number of cofactors. It forms dimeric complexes. Heme b serves as cofactor.

The protein resides in the plastid. It localises to the chloroplast thylakoid membrane. In terms of biological role, this b-type cytochrome is tightly associated with the reaction center of photosystem II (PSII). PSII is a light-driven water:plastoquinone oxidoreductase that uses light energy to abstract electrons from H(2)O, generating O(2) and a proton gradient subsequently used for ATP formation. It consists of a core antenna complex that captures photons, and an electron transfer chain that converts photonic excitation into a charge separation. The polypeptide is Cytochrome b559 subunit beta (Beta vulgaris (Sugar beet)).